We begin with the raw amino-acid sequence, 196 residues long: Corticoliberin (196 aa).

The first 24 residues, 1-24, serve as a signal peptide directing secretion; the sequence is MRLPLLLSAGVLLVVSLPCPPCRA. The propeptide occupies 25–153; it reads LLSRGPIPGA…RQETPERERR (129 aa). The disordered stretch occupies residues 122–158; that stretch reads PRRQLDSPAGPAERGEENALGSRQETPERERRSEEPP. The span at 146-156 shows a compositional bias: basic and acidic residues; sequence ETPERERRSEE. Residue Ile-194 is modified to Isoleucine amide.

The protein belongs to the sauvagine/corticotropin-releasing factor/urotensin I family. As to quaternary structure, interacts (via C-terminus) with CRFR1 (via N-terminal extracellular domain). Produced by the hypothalamus.

Its subcellular location is the secreted. Functionally, hormone regulating the release of corticotropin from pituitary gland. Induces NLRP6 in intestinal epithelial cells, hence may influence gut microbiota profile. The sequence is that of Corticoliberin (CRH) from Canis lupus familiaris (Dog).